The primary structure comprises 545 residues: Mesoderm induction early response protein 2 (545 aa).

Ser-11 bears the Phosphoserine mark. The segment at 100-189 is disordered; it reads DPISDRESEG…SSDTEEDSLP (90 aa). The span at 140 to 153 shows a compositional bias: polar residues; that stretch reads QSSADDLTPSVTSH. In terms of domain architecture, ELM2 spans 195–292; it reads KEIMVGPQFQ…EALRRLRFNV (98 aa). The region spanning 297-349 is the SANT domain; sequence DGLCAWSEEECRNFEHGFRVHGKNFHLIQANKVRTRSVGECVEYYYLWKKSER. The segment at 364–464 is disordered; it reads YVPSGTTDAD…YQPAVTAPEP (101 aa).

Part of a complex containing at least CDYL, MIER1, MIER2, HDAC1 and HDAC2.

The protein resides in the nucleus. In terms of biological role, transcriptional repressor. The sequence is that of Mesoderm induction early response protein 2 (MIER2) from Homo sapiens (Human).